The primary structure comprises 268 residues: Nickel import ATP-binding protein NikE (268 aa).

Residues 4–252 form the ABC transporter domain; it reads LNVSDLSHHY…SSDAGRVLQN (249 aa). Residue 45–52 coordinates ATP; the sequence is GRSGCGKS.

The protein belongs to the ABC transporter superfamily. Nickel importer (TC 3.A.1.5.3) family. The complex is composed of two ATP-binding proteins (NikD and NikE), two transmembrane proteins (NikB and NikC) and a solute-binding protein (NikA).

Its subcellular location is the cell inner membrane. It carries out the reaction Ni(2+)(out) + ATP + H2O = Ni(2+)(in) + ADP + phosphate + H(+). Its function is as follows. Part of the ABC transporter complex NikABCDE involved in nickel import. Responsible for energy coupling to the transport system. The protein is Nickel import ATP-binding protein NikE of Shigella dysenteriae serotype 1 (strain Sd197).